The primary structure comprises 255 residues: Indole-3-glycerol phosphate synthase (255 aa).

The protein belongs to the TrpC family.

It carries out the reaction 1-(2-carboxyphenylamino)-1-deoxy-D-ribulose 5-phosphate + H(+) = (1S,2R)-1-C-(indol-3-yl)glycerol 3-phosphate + CO2 + H2O. Its pathway is amino-acid biosynthesis; L-tryptophan biosynthesis; L-tryptophan from chorismate: step 4/5. The protein is Indole-3-glycerol phosphate synthase of Streptococcus pneumoniae (strain 70585).